A 452-amino-acid chain; its full sequence is Disintegrin and metalloproteinase domain-containing protein 11 (452 aa).

The Peptidase M12B domain occupies 1-120 (RRHHSPLLVS…GGGSCLFNKP (120 aa)). Over 1–417 (RRHHSPLLVS…EKYKGPSGTN (417 aa)) the chain is Extracellular. 3 cysteine pairs are disulfide-bonded: cysteine 31-cysteine 115, cysteine 74-cysteine 99, and cysteine 76-cysteine 83. In terms of domain architecture, Disintegrin spans 126 to 214 (PPSCGNGFIE…ACPANLHKQD (89 aa)). Residue asparagine 149 is glycosylated (N-linked (GlcNAc...) asparagine). Cysteine 186 and cysteine 206 are oxidised to a cystine. 2 N-linked (GlcNAc...) asparagine glycosylation sites follow: asparagine 288 and asparagine 356. Intrachain disulfides connect cysteine 360–cysteine 375, cysteine 369–cysteine 381, and cysteine 383–cysteine 392. Residues 360–416 (CPGSWNGVICSDHGVCSNEGKCICHPEWTGKDCSVYDPLPVPKPTGVVEKYKGPSGT) enclose the EGF-like domain. The chain crosses the membrane as a helical span at residues 418-438 (IIIGSIAGAVLIAAIVLGGTG). Topologically, residues 439–452 (WGFKNIRRGRSGGG) are cytoplasmic.

In terms of processing, the precursor is cleaved by a furin endopeptidase. As to expression, detected in testis and barely expressed in heart and muscle. Not detectable in liver.

It is found in the presynaptic cell membrane. It localises to the perikaryon. Its subcellular location is the cell projection. The protein resides in the axon. In terms of biological role, probable ligand for integrin in the brain. This is a non-catalytic metalloprotease-like protein. This chain is Disintegrin and metalloproteinase domain-containing protein 11 (adam11), found in Xenopus laevis (African clawed frog).